We begin with the raw amino-acid sequence, 902 residues long: MKIAVIGQSLFGREVYRELLKEGHQVVGVFTIPDKNGKADPLGADAEKDGIPVFKFPRWRVKGQAIPEVVEKYKALEAELNVLPFCSQFIPMEVIDCPKHGSIIYHPSILPRHRGASAINWTLMQGDKIGGFTIFWADDGLDTGDILLQRECEVLPDDTVNTIYNRFLFPEGVKGMVEAVRLIAEGNAPRIKQATEGATYDPMQKKENAKINWDQPAEAIHNFIRGNDKVPGAWTVVGDQQLTFFGSSFISNGPAPDGQPLEIPGAFRPAVVTKTGLVLFGNDGQKLSVKNIQFEDGKMIPASQYYKTADSAALQLSDEEKKFSEEIRAAWKRILTNVSEIEDSTDFFKAGAASMDVVRLVEEVKLKCNGLQLQNEDVYMATKFEEFIQMVVRRLRGEDGEEELVVDYVEKEINNMTVKIPHQLFINGQFIDAEGGKTYDTVNPTDGTAICKVSLAQVSDIDRAVAAAKEAFENGEWGKMNPRDRGRILYRLADIMEEHQEELATIESIDSGAVYTLALKTHVGMSIQTFRYFAGWCDKIQGSTIPINQARPNRNLTFTRREPIGVCGIVIPWNYPLMMLAWKTAACLAAGNTVVLKPAQVTPLTALKFAELSVKAGIPKGVINILPGAGSLIGQRLSDHPDVRKIGFTGSTPIGKHIMKSCAVGNVKKVSLELGGKSPLIIFQDCDLDKAVRMGMSSVFFNKGENCIAAGRLFLEESIHDEFVKRVVGEVKKMKIGDPLDRSTDHGPQNHKAHLDKLIEYCQTGVKEGAKLVYGGKQVERPGFFFEPTIFTDVTDEMFIAKEESFGPIMIISKFKDGDVDEVLKRANNTEFGLASGVFTKDISKALYVSEKLQAGTVFVNTYNKTDVAAPFGGFKQSGFGKDLGEEALNEYLKTKAVTIEY.

Positions 1–310 (MKIAVIGQSL…PASQYYKTAD (310 aa)) are hydrolase domain. 88-90 (QFI) provides a ligand contact to (6R)-10-formyltetrahydrofolate. H106 (proton donor) is an active-site residue. D142 contributes to the (6R)-10-formyltetrahydrofolate binding site. The Carrier domain occupies 318–395 (DEEKKFSEEI…EFIQMVVRRL (78 aa)). The residue at position 354 (S354) is an O-(pantetheine 4'-phosphoryl)serine. The interval 417–902 (TVKIPHQLFI…LKTKAVTIEY (486 aa)) is aldehyde dehydrogenase domain. NADP(+) is bound by residues 571 to 573 (IPW), 597 to 600 (KPAQ), 630 to 635 (GSLIGQ), 650 to 651 (GS), and 673 to 674 (EL). E673 acts as the Proton acceptor in catalysis. C707 acts as the Proton donor in catalysis. Residues K757 and 804 to 806 (ESF) each bind NADP(+).

The protein in the N-terminal section; belongs to the GART family. It in the C-terminal section; belongs to the aldehyde dehydrogenase family. ALDH1L subfamily. In terms of assembly, homotetramer. Post-translationally, phosphopantetheinylation at Ser-354 by AASDHPPT is required for the formyltetrahydrofolate dehydrogenase activity.

Its subcellular location is the cytoplasm. The protein resides in the cytosol. The catalysed reaction is (6R)-10-formyltetrahydrofolate + NADP(+) + H2O = (6S)-5,6,7,8-tetrahydrofolate + CO2 + NADPH + H(+). Cytosolic 10-formyltetrahydrofolate dehydrogenase that catalyzes the NADP(+)-dependent conversion of 10-formyltetrahydrofolate to tetrahydrofolate and carbon dioxide. May also have an NADP(+)-dependent aldehyde dehydrogenase activity towards formaldehyde, acetaldehyde, propionaldehyde, and benzaldehyde. Regulates reduced folate pools as well as glycine metabolism. The polypeptide is Cytosolic 10-formyltetrahydrofolate dehydrogenase (aldh1l1) (Xenopus tropicalis (Western clawed frog)).